Here is a 416-residue protein sequence, read N- to C-terminus: Serine protease inhibitor A3K (416 aa).

The first 20 residues, 1–20 (MAFIAALGLLMAGICPAVLC), serve as a signal peptide directing secretion. N-linked (GlcNAc...) asparagine glycans are attached at residues Asn102, Asn182, Asn220, and Asn267. The interval 365-392 (GTEGAAATAVTAALKSLPQTIPLLNFNR) is RCL.

This sequence belongs to the serpin family. In terms of processing, N-glycosylated. Liver and plasma.

The protein resides in the secreted. Binds to and inhibits kallikreins. Inhibits trypsin but not chymotrypsin or elastase. This is Serine protease inhibitor A3K (Serpina3k) from Rattus norvegicus (Rat).